Consider the following 343-residue polypeptide: MKKKVAILFGGQSTEHEVSRVSASSVLKNIDLSKYDVYPIGITKDGKWFEYTGAIDKIESGEWEKDEFYKNPNGQEILFNREVDVVFPVMHGLYGEDGTIQGLCKLLTIPCVGPGVMSSAVCMDKVYTKYVLENFGVKQADYVVVNAHDYKNNKMDIISTIENKLGYDVFIKPSNSGSSVGISKAHNREELEAGLEEALKFDRKVLVEVALNAREIEVAVLGNDEPVAATPGEIVPANEFYDYEAKYSNAQSKLLLPANLSPEKLEKVKELAVRIFKMLDCAGMSRVDFLVDKETEEVYLNEINTIPGFTKISMYPKMWQAEGKAYGELISEIIELAVERDNK.

The ATP-grasp domain maps to 129 to 335 (KYVLENFGVK…YGELISEIIE (207 aa)). An ATP-binding site is contributed by 162–217 (ENKLGYDVFIKPSNSGSSVGISKAHNREELEAGLEEALKFDRKVLVEVALNAREIE). Residues D288, E302, and N304 each contribute to the Mg(2+) site.

Belongs to the D-alanine--D-alanine ligase family. Mg(2+) is required as a cofactor. It depends on Mn(2+) as a cofactor.

It is found in the cytoplasm. The catalysed reaction is 2 D-alanine + ATP = D-alanyl-D-alanine + ADP + phosphate + H(+). The protein operates within cell wall biogenesis; peptidoglycan biosynthesis. Functionally, cell wall formation. The sequence is that of D-alanine--D-alanine ligase from Clostridium novyi (strain NT).